A 378-amino-acid polypeptide reads, in one-letter code: Mannitol-1-phosphate 5-dehydrogenase (378 aa).

Position 4–15 (4–15 (SVHFGAGNIGRG)) interacts with NAD(+).

It belongs to the mannitol dehydrogenase family.

The catalysed reaction is D-mannitol 1-phosphate + NAD(+) = beta-D-fructose 6-phosphate + NADH + H(+). The polypeptide is Mannitol-1-phosphate 5-dehydrogenase (Streptococcus pneumoniae (strain ATCC 700669 / Spain 23F-1)).